Here is a 210-residue protein sequence, read N- to C-terminus: Orotate phosphoribosyltransferase (210 aa).

Residues R94, K98, H100, and E120 to S128 each bind 5-phospho-alpha-D-ribose 1-diphosphate. S124 serves as a coordination point for orotate.

Belongs to the purine/pyrimidine phosphoribosyltransferase family. PyrE subfamily. In terms of assembly, homodimer. Requires Mg(2+) as cofactor.

The enzyme catalyses orotidine 5'-phosphate + diphosphate = orotate + 5-phospho-alpha-D-ribose 1-diphosphate. It participates in pyrimidine metabolism; UMP biosynthesis via de novo pathway; UMP from orotate: step 1/2. Catalyzes the transfer of a ribosyl phosphate group from 5-phosphoribose 1-diphosphate to orotate, leading to the formation of orotidine monophosphate (OMP). The chain is Orotate phosphoribosyltransferase from Halalkalibacterium halodurans (strain ATCC BAA-125 / DSM 18197 / FERM 7344 / JCM 9153 / C-125) (Bacillus halodurans).